Reading from the N-terminus, the 658-residue chain is Protein translocase subunit SecA 3 (658 aa).

Residues Q111, 129–133, and D536 each bind ATP; that span reads GEGKT.

This sequence belongs to the SecA family. As to quaternary structure, monomer and homodimer. Part of the essential Sec protein translocation apparatus which comprises SecA, SecYEG and auxiliary proteins SecDF-YajC and YidC.

The protein localises to the cell inner membrane. Its subcellular location is the cytoplasm. The catalysed reaction is ATP + H2O + cellular proteinSide 1 = ADP + phosphate + cellular proteinSide 2.. Its function is as follows. Part of the Sec protein translocase complex. Interacts with the SecYEG preprotein conducting channel. Has a central role in coupling the hydrolysis of ATP to the transfer of proteins into and across the cell membrane, serving both as a receptor for the preprotein-SecB complex and as an ATP-driven molecular motor driving the stepwise translocation of polypeptide chains across the membrane. This chain is Protein translocase subunit SecA 3, found in Magnetococcus marinus (strain ATCC BAA-1437 / JCM 17883 / MC-1).